Here is a 710-residue protein sequence, read N- to C-terminus: DNA ligase (710 aa).

NAD(+)-binding positions include 53–57 (DAEYD), 102–103 (SL), and glutamate 136. Lysine 138 serves as the catalytic N6-AMP-lysine intermediate. NAD(+) is bound by residues arginine 159, glutamate 196, lysine 312, and lysine 336. Positions 429, 432, 453, and 459 each coordinate Zn(2+). One can recognise a BRCT domain in the interval 633–710 (ETSSPVAGKT…DEDQWIELAG (78 aa)).

Belongs to the NAD-dependent DNA ligase family. LigA subfamily. Requires Mg(2+) as cofactor. It depends on Mn(2+) as a cofactor.

The catalysed reaction is NAD(+) + (deoxyribonucleotide)n-3'-hydroxyl + 5'-phospho-(deoxyribonucleotide)m = (deoxyribonucleotide)n+m + AMP + beta-nicotinamide D-nucleotide.. Its function is as follows. DNA ligase that catalyzes the formation of phosphodiester linkages between 5'-phosphoryl and 3'-hydroxyl groups in double-stranded DNA using NAD as a coenzyme and as the energy source for the reaction. It is essential for DNA replication and repair of damaged DNA. In Parvibaculum lavamentivorans (strain DS-1 / DSM 13023 / NCIMB 13966), this protein is DNA ligase.